A 353-amino-acid polypeptide reads, in one-letter code: Photosystem II D2 protein (353 aa).

An N-acetylthreonine modification is found at threonine 2. A Phosphothreonine modification is found at threonine 2. Residues 41–61 (CAYFALGGWFTGTTFVTSWYT) form a helical membrane-spanning segment. Position 118 (histidine 118) interacts with chlorophyll a. The helical transmembrane segment at 125-141 (GFMLRQFELARSVQLRP) threads the bilayer. Residues glutamine 130 and asparagine 143 each contribute to the pheophytin a site. The chain crosses the membrane as a helical span at residues 153–166 (VFVSVFLIYPLGQS). A chlorophyll a-binding site is contributed by histidine 198. The chain crosses the membrane as a helical span at residues 208–228 (AALLCAIHGATVENTLFEDGD). A plastoquinone-binding residues include histidine 215 and phenylalanine 262. Fe cation is bound at residue histidine 215. A Fe cation-binding site is contributed by histidine 269. A helical membrane pass occupies residues 279–295 (GLWMSALGVVGLALNLR).

The protein belongs to the reaction center PufL/M/PsbA/D family. PSII is composed of 1 copy each of membrane proteins PsbA, PsbB, PsbC, PsbD, PsbE, PsbF, PsbH, PsbI, PsbJ, PsbK, PsbL, PsbM, PsbT, PsbX, PsbY, PsbZ, Psb30/Ycf12, at least 3 peripheral proteins of the oxygen-evolving complex and a large number of cofactors. It forms dimeric complexes. Requires The D1/D2 heterodimer binds P680, chlorophylls that are the primary electron donor of PSII, and subsequent electron acceptors. It shares a non-heme iron and each subunit binds pheophytin, quinone, additional chlorophylls, carotenoids and lipids. There is also a Cl(-1) ion associated with D1 and D2, which is required for oxygen evolution. The PSII complex binds additional chlorophylls, carotenoids and specific lipids. as cofactor.

The protein resides in the plastid. Its subcellular location is the chloroplast thylakoid membrane. It carries out the reaction 2 a plastoquinone + 4 hnu + 2 H2O = 2 a plastoquinol + O2. Functionally, photosystem II (PSII) is a light-driven water:plastoquinone oxidoreductase that uses light energy to abstract electrons from H(2)O, generating O(2) and a proton gradient subsequently used for ATP formation. It consists of a core antenna complex that captures photons, and an electron transfer chain that converts photonic excitation into a charge separation. The D1/D2 (PsbA/PsbD) reaction center heterodimer binds P680, the primary electron donor of PSII as well as several subsequent electron acceptors. D2 is needed for assembly of a stable PSII complex. This is Photosystem II D2 protein from Nymphaea alba (White water-lily).